Consider the following 407-residue polypeptide: D-mannose isomerase (407 aa).

Residues histidine 251 and histidine 383 each act as proton donor/acceptor in the active site.

Belongs to the N-acylglucosamine 2-epimerase family. In terms of assembly, homodimer.

It catalyses the reaction D-mannose = D-fructose. It carries out the reaction D-lyxose = D-xylulose. Its activity is regulated as follows. Significantly inhibited by divalent metal ions such as Cu(2+), Cd(2+) or Ca(2+). In terms of biological role, catalyzes the reversible isomerization of D-mannose to D-fructose. Shows weaker activity on D-lyxose, but cannot use N-acetyl D-glucosamine. The sequence is that of D-mannose isomerase from Thermobifida fusca (Thermomonospora fusca).